The following is a 292-amino-acid chain: ATP-dependent Clp protease proteolytic subunit 4, chloroplastic (292 aa).

The transit peptide at methionine 1–methionine 65 directs the protein to the chloroplast. Serine 66 carries the N-acetylserine modification. The active-site Nucleophile is serine 158. Histidine 183 is an active-site residue.

Belongs to the peptidase S14 family. As to quaternary structure, component of the chloroplastic Clp protease core complex which consist of at least 16 proteins: CLPP4 (3 copies), CLPP5 (3 copies), CLPR4 (2 copies), ClpP1 (1 copy), CLPP6 (1 copy), CLPR2 (1 copy), CLPT1 (1 copy), CLPT2 (1 copy) and 3 copies of CLPP3 and/or CLPR1 and/or CLPR3. Interacts with CHIP. The core complex is organized in two heptameric rings, one containing CLPP3,4,5,6 in a 1:2:3:1 ratio and the other CLPP1 and CLPR1,2,3,4 in a 3:1:1:1:1 ratio. Ubiquitinated by CHIP. In terms of tissue distribution, mostly expressed in leaves. Also detected in stems, and to a lower extent, in roots (at protein level).

Its subcellular location is the plastid. The protein localises to the chloroplast stroma. The catalysed reaction is Hydrolysis of proteins to small peptides in the presence of ATP and magnesium. alpha-casein is the usual test substrate. In the absence of ATP, only oligopeptides shorter than five residues are hydrolyzed (such as succinyl-Leu-Tyr-|-NHMec, and Leu-Tyr-Leu-|-Tyr-Trp, in which cleavage of the -Tyr-|-Leu- and -Tyr-|-Trp bonds also occurs).. Cleaves peptides in various proteins in a process that requires ATP hydrolysis. Has a chymotrypsin-like activity. Plays a major role in the degradation of misfolded proteins. Essential protein required for chloroplast development and integrity. Essential for Embryogenesis. In Arabidopsis thaliana (Mouse-ear cress), this protein is ATP-dependent Clp protease proteolytic subunit 4, chloroplastic.